The following is a 333-amino-acid chain: DNA-directed RNA polymerase subunit alpha (333 aa).

The alpha N-terminal domain (alpha-NTD) stretch occupies residues 1–233 (MVREKIRVST…DLFIPFLHAE (233 aa)). The segment at 267–333 (KEIALKSIFI…DFLEIEKHFA (67 aa)) is alpha C-terminal domain (alpha-CTD).

Belongs to the RNA polymerase alpha chain family. As to quaternary structure, in plastids the minimal PEP RNA polymerase catalytic core is composed of four subunits: alpha, beta, beta', and beta''. When a (nuclear-encoded) sigma factor is associated with the core the holoenzyme is formed, which can initiate transcription.

The protein localises to the plastid. It is found in the chloroplast. It catalyses the reaction RNA(n) + a ribonucleoside 5'-triphosphate = RNA(n+1) + diphosphate. Functionally, DNA-dependent RNA polymerase catalyzes the transcription of DNA into RNA using the four ribonucleoside triphosphates as substrates. In Glycine max (Soybean), this protein is DNA-directed RNA polymerase subunit alpha.